The chain runs to 91 residues: Acylphosphatase (91 aa).

In terms of domain architecture, Acylphosphatase-like spans 3–90 (RVSMIVSGQV…CGYSIFTIRR (88 aa)). Active-site residues include R18 and N36.

The protein belongs to the acylphosphatase family.

It carries out the reaction an acyl phosphate + H2O = a carboxylate + phosphate + H(+). This chain is Acylphosphatase (acyP), found in Methanospirillum hungatei JF-1 (strain ATCC 27890 / DSM 864 / NBRC 100397 / JF-1).